Consider the following 35-residue polypeptide: Endochitinase 2 (35 aa).

The protein belongs to the glycosyl hydrolase 19 family. Chitinase class I subfamily.

It catalyses the reaction Random endo-hydrolysis of N-acetyl-beta-D-glucosaminide (1-&gt;4)-beta-linkages in chitin and chitodextrins.. Functionally, defense against chitin-containing fungal pathogens. The protein is Endochitinase 2 of Capsicum chinense (Scotch bonnet).